A 253-amino-acid chain; its full sequence is Phosphoglycerate mutase 2 (253 aa).

Threonine 3 bears the Phosphothreonine mark. Residues 10–17 (RHGESTWN), 23–24 (CG), arginine 62, 89–92 (ERHY), lysine 100, and 116–117 (RR) contribute to the substrate site. Histidine 11 acts as the Tele-phosphohistidine intermediate in catalysis. The residue at position 14 (serine 14) is a Phosphoserine. Glutamate 89 serves as the catalytic Proton donor/acceptor. A Phosphoserine modification is found at serine 118. Phosphotyrosine is present on residues tyrosine 132 and tyrosine 133. Residue serine 135 is modified to Phosphoserine. Phosphothreonine is present on threonine 152. Substrate is bound at residue 187–188 (GN).

The protein belongs to the phosphoglycerate mutase family. BPG-dependent PGAM subfamily. As to quaternary structure, homodimer. Interacts with ENO1. In terms of tissue distribution, expressed in the heart and muscle. Not found in the liver and brain.

It carries out the reaction (2R)-2-phosphoglycerate = (2R)-3-phosphoglycerate. It catalyses the reaction (2R)-3-phospho-glyceroyl phosphate = (2R)-2,3-bisphosphoglycerate + H(+). Functionally, interconversion of 3- and 2-phosphoglycerate with 2,3-bisphosphoglycerate as the primer of the reaction. Can also catalyze the reaction of EC 5.4.2.4 (synthase), but with a reduced activity. The protein is Phosphoglycerate mutase 2 (PGAM2) of Homo sapiens (Human).